A 68-amino-acid polypeptide reads, in one-letter code: Sperm-associated antigen 11A (68 aa).

The first 19 residues, 1-19, serve as a signal peptide directing secretion; it reads MKVLLLFAVFFCLVQRNSG. Cystine bridges form between Cys30/Cys59, Cys37/Cys52, and Cys42/Cys60.

The protein belongs to the beta-defensin family. Only expressed in epididymis (middle part of the caput).

It localises to the secreted. Has antimicrobial activity against E.coli. Plays a role in the defense response in the male reproductive tract, contributing to sperm maturation, storage and protection. The chain is Sperm-associated antigen 11A from Rattus norvegicus (Rat).